Consider the following 461-residue polypeptide: Acetylcholine receptor subunit alpha (461 aa).

Residues Met-1–Gly-24 form the signal peptide. Residues Ser-25–Ile-234 are Extracellular-facing. 2 cysteine pairs are disulfide-bonded: Cys-152/Cys-166 and Cys-216/Cys-217. A glycan (N-linked (GlcNAc...) asparagine) is linked at Asn-165. The next 3 helical transmembrane spans lie at Pro-235–Leu-259, Met-267–Val-285, and Tyr-301–Ile-320. Residues Asn-321 to His-432 lie on the Cytoplasmic side of the membrane. The helical transmembrane segment at Ile-433–Ala-451 threads the bilayer.

The protein belongs to the ligand-gated ion channel (TC 1.A.9) family. Acetylcholine receptor (TC 1.A.9.1) subfamily. Alpha-1/CHRNA1 sub-subfamily. In terms of assembly, pentamer of two alpha chains, and one each of the beta, delta, and gamma chains.

It localises to the postsynaptic cell membrane. Its subcellular location is the cell membrane. The catalysed reaction is K(+)(in) = K(+)(out). It catalyses the reaction Na(+)(in) = Na(+)(out). Functionally, upon acetylcholine binding, the AChR responds by an extensive change in conformation that affects all subunits and leads to opening of an ion-conducting channel across the plasma membrane. The protein is Acetylcholine receptor subunit alpha (CHRNA1) of Tetronarce californica (Pacific electric ray).